The chain runs to 218 residues: Uracil-DNA glycosylase (218 aa).

Residue Asp-60 is the Proton acceptor of the active site.

It belongs to the uracil-DNA glycosylase (UDG) superfamily. UNG family.

It is found in the cytoplasm. It carries out the reaction Hydrolyzes single-stranded DNA or mismatched double-stranded DNA and polynucleotides, releasing free uracil.. Its function is as follows. Excises uracil residues from the DNA which can arise as a result of misincorporation of dUMP residues by DNA polymerase or due to deamination of cytosine. The sequence is that of Uracil-DNA glycosylase from Francisella philomiragia subsp. philomiragia (strain ATCC 25017 / CCUG 19701 / FSC 153 / O#319-036).